We begin with the raw amino-acid sequence, 607 residues long: Elongation factor 4 (607 aa).

The 183-residue stretch at 11-193 folds into the tr-type G domain; sequence SKIRNFSIIA…QIVEKVPAPT (183 aa). GTP-binding positions include 23–28 and 140–143; these read DHGKST and NKID.

Belongs to the TRAFAC class translation factor GTPase superfamily. Classic translation factor GTPase family. LepA subfamily.

It localises to the cell membrane. The catalysed reaction is GTP + H2O = GDP + phosphate + H(+). Its function is as follows. Required for accurate and efficient protein synthesis under certain stress conditions. May act as a fidelity factor of the translation reaction, by catalyzing a one-codon backward translocation of tRNAs on improperly translocated ribosomes. Back-translocation proceeds from a post-translocation (POST) complex to a pre-translocation (PRE) complex, thus giving elongation factor G a second chance to translocate the tRNAs correctly. Binds to ribosomes in a GTP-dependent manner. The polypeptide is Elongation factor 4 (Bacillus cereus (strain Q1)).